A 238-amino-acid polypeptide reads, in one-letter code: Uridylate kinase (238 aa).

12–15 is an ATP binding site; the sequence is KLSG. G54 provides a ligand contact to UMP. Residues G55 and R59 each coordinate ATP. Residues D74 and 135–142 each bind UMP; that span reads TGNPYFTT. Residues T162, N163, Y168, and D171 each contribute to the ATP site.

It belongs to the UMP kinase family. In terms of assembly, homohexamer.

The protein localises to the cytoplasm. It catalyses the reaction UMP + ATP = UDP + ADP. It functions in the pathway pyrimidine metabolism; CTP biosynthesis via de novo pathway; UDP from UMP (UMPK route): step 1/1. Its activity is regulated as follows. Inhibited by UTP. In terms of biological role, catalyzes the reversible phosphorylation of UMP to UDP. This Bradyrhizobium sp. (strain BTAi1 / ATCC BAA-1182) protein is Uridylate kinase.